Here is a 363-residue protein sequence, read N- to C-terminus: Ribosome-binding ATPase YchF (363 aa).

The 254-residue stretch at 3–256 (FKCGIVGLPN…LEDEEKVDFL (254 aa)) folds into the OBG-type G domain. 12 to 17 (NVGKST) is an ATP binding site. The Mg(2+) site is built by Ser-16 and Thr-36. Positions 278 to 361 (NLQTYFTAGV…QDGDVMHFRF (84 aa)) constitute a TGS domain.

This sequence belongs to the TRAFAC class OBG-HflX-like GTPase superfamily. OBG GTPase family. YchF/OLA1 subfamily. The cofactor is Mg(2+).

In terms of biological role, ATPase that binds to both the 70S ribosome and the 50S ribosomal subunit in a nucleotide-independent manner. This Haemophilus ducreyi (strain 35000HP / ATCC 700724) protein is Ribosome-binding ATPase YchF.